We begin with the raw amino-acid sequence, 407 residues long: tRNA pseudouridine synthase 4 (407 aa).

The disordered stretch occupies residues 83–105; sequence FRPAPPHPNDRNRRRRKSNRLPD. Catalysis depends on Asp115, which acts as the Nucleophile. The disordered stretch occupies residues 274–298; sequence TEQDINPQDGDEKINAKSPTTNSVT. Ser291 bears the Phosphoserine mark. Residue Thr293 is modified to Phosphothreonine. Residue Ser296 is modified to Phosphoserine. A Phosphothreonine modification is found at Thr406.

The protein belongs to the pseudouridine synthase TruB family.

It localises to the nucleus. It is found in the mitochondrion. It carries out the reaction uridine(55) in tRNA = pseudouridine(55) in tRNA. The catalysed reaction is a uridine in mRNA = a pseudouridine in mRNA. In terms of biological role, responsible for synthesis of pseudouridine from uracil-55 in the psi GC loop of transfer RNAs. Also catalyzes pseudouridylation of mRNAs with the consensus sequence 5'-GGUUCRA-3'. The chain is tRNA pseudouridine synthase 4 from Schizosaccharomyces pombe (strain 972 / ATCC 24843) (Fission yeast).